Reading from the N-terminus, the 136-residue chain is Small ribosomal subunit protein uS11 (136 aa).

Belongs to the universal ribosomal protein uS11 family. As to quaternary structure, part of the 30S ribosomal subunit. Interacts with proteins S7 and S18. Binds to IF-3.

Located on the platform of the 30S subunit, it bridges several disparate RNA helices of the 16S rRNA. Forms part of the Shine-Dalgarno cleft in the 70S ribosome. This Leptospira borgpetersenii serovar Hardjo-bovis (strain JB197) protein is Small ribosomal subunit protein uS11.